Reading from the N-terminus, the 492-residue chain is Cysteine--tRNA ligase (492 aa).

Zn(2+) is bound at residue Cys-29. A 'HIGH' region motif is present at residues 31 to 41 (LTTSDPPHLGH). Cys-229, His-254, and Glu-258 together coordinate Zn(2+). The 'KMSKS' region signature appears at 286–290 (KMSSS).

The protein belongs to the class-I aminoacyl-tRNA synthetase family. Zn(2+) serves as cofactor.

Its subcellular location is the cytoplasm. It catalyses the reaction tRNA(Cys) + L-cysteine + ATP = L-cysteinyl-tRNA(Cys) + AMP + diphosphate. The chain is Cysteine--tRNA ligase from Haloarcula marismortui (strain ATCC 43049 / DSM 3752 / JCM 8966 / VKM B-1809) (Halobacterium marismortui).